Here is a 176-residue protein sequence, read N- to C-terminus: RNA pyrophosphohydrolase (176 aa).

Residues 6–149 form the Nudix hydrolase domain; sequence GYRPNVGIVI…KRDVYRRVMK (144 aa). Residues 38–59 carry the Nudix box motif; it reads GGINPGESAEQAMYRELFEEVG.

Belongs to the Nudix hydrolase family. RppH subfamily. It depends on a divalent metal cation as a cofactor.

Its function is as follows. Accelerates the degradation of transcripts by removing pyrophosphate from the 5'-end of triphosphorylated RNA, leading to a more labile monophosphorylated state that can stimulate subsequent ribonuclease cleavage. In Salmonella arizonae (strain ATCC BAA-731 / CDC346-86 / RSK2980), this protein is RNA pyrophosphohydrolase.